The sequence spans 631 residues: Aerobic cobaltochelatase subunit CobT (631 aa).

A disordered region spans residues 218–306 (KYGDDDNEPD…EVKRPNQPFA (89 aa)). Composition is skewed to acidic residues over residues 222 to 235 (DDNE…ETDE) and 243 to 294 (QDEN…DSET). In terms of domain architecture, VWFA spans 412–631 (VVTLLIDNSG…RGSSRLRRAG (220 aa)).

As to quaternary structure, heterotrimer of CobN, CobS and CobT.

It localises to the cytoplasm. It carries out the reaction hydrogenobyrinate a,c-diamide + Co(2+) + ATP + H2O = cob(II)yrinate a,c diamide + ADP + phosphate + 5 H(+). It functions in the pathway cofactor biosynthesis; adenosylcobalamin biosynthesis; cob(II)yrinate a,c-diamide from precorrin-2 (aerobic route): step 10/10. Catalyzes cobalt insertion in the corrin ring. This chain is Aerobic cobaltochelatase subunit CobT (cobT), found in Sinorhizobium sp.